The sequence spans 133 residues: Large ribosomal subunit protein uL22 (133 aa).

The protein belongs to the universal ribosomal protein uL22 family. In terms of assembly, part of the 50S ribosomal subunit.

In terms of biological role, this protein binds specifically to 23S rRNA; its binding is stimulated by other ribosomal proteins, e.g. L4, L17, and L20. It is important during the early stages of 50S assembly. It makes multiple contacts with different domains of the 23S rRNA in the assembled 50S subunit and ribosome. Functionally, the globular domain of the protein is located near the polypeptide exit tunnel on the outside of the subunit, while an extended beta-hairpin is found that lines the wall of the exit tunnel in the center of the 70S ribosome. The sequence is that of Large ribosomal subunit protein uL22 from Granulibacter bethesdensis (strain ATCC BAA-1260 / CGDNIH1).